A 216-amino-acid chain; its full sequence is Eukaryotic translation initiation factor 3 subunit K (216 aa).

The PCI domain occupies 40–202 (YDLDANLAVL…HIKSKNIAEK (163 aa)).

It belongs to the eIF-3 subunit K family. In terms of assembly, component of the eukaryotic translation initiation factor 3 (eIF-3) complex.

Its subcellular location is the cytoplasm. Its function is as follows. Component of the eukaryotic translation initiation factor 3 (eIF-3) complex, which is involved in protein synthesis of a specialized repertoire of mRNAs and, together with other initiation factors, stimulates binding of mRNA and methionyl-tRNAi to the 40S ribosome. The eIF-3 complex specifically targets and initiates translation of a subset of mRNAs involved in cell proliferation. The sequence is that of Eukaryotic translation initiation factor 3 subunit K from Nematostella vectensis (Starlet sea anemone).